Consider the following 98-residue polypeptide: NADH-ubiquinone oxidoreductase chain 4L (98 aa).

A run of 3 helical transmembrane segments spans residues 1-21, 29-49, and 59-79; these read MTAI…GVLV, TLLC…LLIT, and LPLT…ALLV.

Belongs to the complex I subunit 4L family. Core subunit of respiratory chain NADH dehydrogenase (Complex I) which is composed of 45 different subunits.

It is found in the mitochondrion inner membrane. The enzyme catalyses a ubiquinone + NADH + 5 H(+)(in) = a ubiquinol + NAD(+) + 4 H(+)(out). Its function is as follows. Core subunit of the mitochondrial membrane respiratory chain NADH dehydrogenase (Complex I) which catalyzes electron transfer from NADH through the respiratory chain, using ubiquinone as an electron acceptor. Part of the enzyme membrane arm which is embedded in the lipid bilayer and involved in proton translocation. This Notoryctes typhlops (Southern marsupial mole) protein is NADH-ubiquinone oxidoreductase chain 4L (MT-ND4L).